The following is a 362-amino-acid chain: Peptide chain release factor 2 (362 aa).

Position 250 is an N5-methylglutamine (Gln250).

The protein belongs to the prokaryotic/mitochondrial release factor family. Post-translationally, methylated by PrmC. Methylation increases the termination efficiency of RF2.

It localises to the cytoplasm. Its function is as follows. Peptide chain release factor 2 directs the termination of translation in response to the peptide chain termination codons UGA and UAA. This chain is Peptide chain release factor 2, found in Clostridium perfringens (strain ATCC 13124 / DSM 756 / JCM 1290 / NCIMB 6125 / NCTC 8237 / Type A).